Here is a 482-residue protein sequence, read N- to C-terminus: 2-succinylbenzoate--CoA ligase (482 aa).

It belongs to the ATP-dependent AMP-binding enzyme family. MenE subfamily.

It carries out the reaction 2-succinylbenzoate + ATP + CoA = 2-succinylbenzoyl-CoA + AMP + diphosphate. The protein operates within quinol/quinone metabolism; 1,4-dihydroxy-2-naphthoate biosynthesis; 1,4-dihydroxy-2-naphthoate from chorismate: step 5/7. It functions in the pathway quinol/quinone metabolism; menaquinone biosynthesis. Functionally, converts 2-succinylbenzoate (OSB) to 2-succinylbenzoyl-CoA (OSB-CoA). This Bacillus thuringiensis subsp. konkukian (strain 97-27) protein is 2-succinylbenzoate--CoA ligase.